The chain runs to 270 residues: Orotidine 5'-phosphate decarboxylase (270 aa).

Residues D41, 63 to 65 (KTH), 95 to 104 (DRKFADIGNT), Y221, and R239 contribute to the substrate site. K97 functions as the Proton donor in the catalytic mechanism.

The protein belongs to the OMP decarboxylase family.

The enzyme catalyses orotidine 5'-phosphate + H(+) = UMP + CO2. It functions in the pathway pyrimidine metabolism; UMP biosynthesis via de novo pathway; UMP from orotate: step 2/2. In Candida boidinii (Yeast), this protein is Orotidine 5'-phosphate decarboxylase (URA3).